The following is a 267-amino-acid chain: Large ribosomal subunit protein mL57 (267 aa).

The segment covering 43–54 has biased composition (low complexity); the sequence is SSSAVQQEQDAS. The disordered stretch occupies residues 43–73; that stretch reads SSSAVQQEQDASGTSSSQQPRPRWSYTPERM.

It belongs to the ribonuclease III family. Mitochondrion-specific ribosomal protein mL57 subfamily. Component of the mitochondrial large ribosomal subunit (mt-LSU). Mature N.crassa 74S mitochondrial ribosomes consist of a small (37S) and a large (54S) subunit. The 37S small subunit contains a 16S ribosomal RNA (16S mt-rRNA) and 32 different proteins. The 54S large subunit contains a 23S rRNA (23S mt-rRNA) and 42 different proteins. mL57 forms a heterodimer with mL44 and stabilizes rRNA expansion segments 1/2 at a membrane-facing protuberance close to the point of attachment of the ribosome to the translocon in the membrane.

The protein localises to the mitochondrion. In terms of biological role, component of the mitochondrial ribosome (mitoribosome), a dedicated translation machinery responsible for the synthesis of mitochondrial genome-encoded proteins, including at least some of the essential transmembrane subunits of the mitochondrial respiratory chain. The mitoribosomes are attached to the mitochondrial inner membrane and translation products are cotranslationally integrated into the membrane. The sequence is that of Large ribosomal subunit protein mL57 (mrpl15) from Neurospora crassa (strain ATCC 24698 / 74-OR23-1A / CBS 708.71 / DSM 1257 / FGSC 987).